A 108-amino-acid chain; its full sequence is uncharacterized protein (108 aa).

The next 2 helical transmembrane spans lie at 51–71 (VFAA…FCFL) and 86–106 (PLST…KSLL).

Its subcellular location is the membrane. This is an uncharacterized protein from Saccharomyces cerevisiae (strain ATCC 204508 / S288c) (Baker's yeast).